We begin with the raw amino-acid sequence, 463 residues long: Adenosylhomocysteinase (463 aa).

Substrate contacts are provided by Thr-54, Asp-128, and Glu-189. Residue 190-192 coordinates NAD(+); the sequence is TTT. Positions 219 and 223 each coordinate substrate. NAD(+)-binding positions include Asn-224, 253–258, Glu-276, Asn-311, 332–334, and Asn-377; these read GYGDVG and IGH.

The protein belongs to the adenosylhomocysteinase family. Homotetramer. NAD(+) is required as a cofactor.

The protein resides in the cytoplasm. It carries out the reaction S-adenosyl-L-homocysteine + H2O = L-homocysteine + adenosine. It participates in amino-acid biosynthesis; L-homocysteine biosynthesis; L-homocysteine from S-adenosyl-L-homocysteine: step 1/1. In terms of biological role, may play a key role in the regulation of the intracellular concentration of adenosylhomocysteine. This chain is Adenosylhomocysteinase, found in Rhodobacter capsulatus (strain ATCC BAA-309 / NBRC 16581 / SB1003).